Reading from the N-terminus, the 101-residue chain is A-type ATP synthase subunit F (101 aa).

It belongs to the V-ATPase F subunit family. In terms of assembly, has multiple subunits, A(3), B(3), C, D, E, F, G, I and K(x); there may be a few other subunits as well.

It localises to the cell membrane. Functionally, component of the A-type ATP synthase that produces ATP from ADP in the presence of a proton gradient across the membrane. This Methanosarcina mazei (strain ATCC BAA-159 / DSM 3647 / Goe1 / Go1 / JCM 11833 / OCM 88) (Methanosarcina frisia) protein is A-type ATP synthase subunit F.